Reading from the N-terminus, the 314-residue chain is L-lactate dehydrogenase 1 (314 aa).

NAD(+)-binding positions include Val16, Asp37, Lys42, Tyr68, and Gly82–Leu83. Substrate-binding positions include Gln85, Arg91, and Asn123–Asp126. NAD(+)-binding positions include Ala121–Asn123 and Ser146. Residue Asp151 to Arg154 coordinates substrate. Positions 156 and 171 each coordinate beta-D-fructose 1,6-bisphosphate. His178 acts as the Proton acceptor in catalysis. Tyr223 is modified (phosphotyrosine). Thr232 contacts substrate.

It belongs to the LDH/MDH superfamily. LDH family. As to quaternary structure, homotetramer.

It localises to the cytoplasm. It catalyses the reaction (S)-lactate + NAD(+) = pyruvate + NADH + H(+). Its pathway is fermentation; pyruvate fermentation to lactate; (S)-lactate from pyruvate: step 1/1. With respect to regulation, allosterically activated by fructose 1,6-bisphosphate (FBP). Its function is as follows. Catalyzes the conversion of lactate to pyruvate. This is L-lactate dehydrogenase 1 from Bacillus anthracis.